Here is a 318-residue protein sequence, read N- to C-terminus: L-carnitine dehydrogenase (318 aa).

Residue 14 to 19 participates in NAD(+) binding; that stretch reads GAGVIG.

It belongs to the 3-hydroxyacyl-CoA dehydrogenase family. L-carnitine dehydrogenase subfamily. As to quaternary structure, homodimer.

The protein localises to the cytoplasm. It catalyses the reaction carnitine + NAD(+) = 3-dehydrocarnitine + NADH + H(+). It participates in amine and polyamine metabolism; carnitine metabolism. Catalyzes the NAD(+)-dependent oxidation of L-carnitine to 3-dehydrocarnitine. This Streptomyces coelicolor (strain ATCC BAA-471 / A3(2) / M145) protein is L-carnitine dehydrogenase.